The following is a 932-amino-acid chain: Protocadherin gamma-A6 (932 aa).

Residues 1 to 29 form the signal peptide; sequence MAPPQRHPQRSEQVLLLTLLGTLWGAAAA. 6 consecutive Cadherin domains span residues 30–133, 134–242, 243–347, 348–452, 453–562, and 570–682; these read QIRY…TPRF, LKEE…TPMF, TQPV…VPEV, VVTS…PPTF, PHSS…APEI, and DGST…EPSA. The Extracellular portion of the chain corresponds to 30–692; sequence QIRYSIPEEL…KPNDSDLTLY (663 aa). N-linked (GlcNAc...) asparagine glycosylation occurs at N81. 2 N-linked (GlcNAc...) asparagine glycosylation sites follow: N419 and N545. N685 is a glycosylation site (N-linked (GlcNAc...) asparagine). Residues 693–713 form a helical membrane-spanning segment; it reads LVVAVAAVSCVFLAFVIVLLA. Residues 714-932 are Cytoplasmic-facing; sequence LRLQRWHKSR…KKKSGKKEKK (219 aa). 2 disordered regions span residues 804–841 and 902–932; these read PRQL…WPNN and ATLT…KEKK. A compositionally biased stretch (polar residues) spans 806-841; that stretch reads QLQQAPPNTDWRFSQAQRPGTSGSQNGDDTGTWPNN. The span at 922–932 shows a compositional bias: basic residues; that stretch reads NKKKSGKKEKK.

It is found in the cell membrane. Functionally, potential calcium-dependent cell-adhesion protein. May be involved in the establishment and maintenance of specific neuronal connections in the brain. In Homo sapiens (Human), this protein is Protocadherin gamma-A6 (PCDHGA6).